The primary structure comprises 542 residues: Chaperonin GroEL 1 (542 aa).

ATP is bound by residues 29–32 (TLGP), 86–90 (DGTTT), Gly-413, 477–479 (NAA), and Asp-493.

The protein belongs to the chaperonin (HSP60) family. Forms a cylinder of 14 subunits composed of two heptameric rings stacked back-to-back. Interacts with the co-chaperonin GroES.

It is found in the cytoplasm. The enzyme catalyses ATP + H2O + a folded polypeptide = ADP + phosphate + an unfolded polypeptide.. In terms of biological role, together with its co-chaperonin GroES, plays an essential role in assisting protein folding. The GroEL-GroES system forms a nano-cage that allows encapsulation of the non-native substrate proteins and provides a physical environment optimized to promote and accelerate protein folding. The chain is Chaperonin GroEL 1 from Kineococcus radiotolerans (strain ATCC BAA-149 / DSM 14245 / SRS30216).